We begin with the raw amino-acid sequence, 88 residues long: UPF0473 protein CLL_A1177 (88 aa).

Belongs to the UPF0473 family.

This is UPF0473 protein CLL_A1177 from Clostridium botulinum (strain Eklund 17B / Type B).